The following is a 359-amino-acid chain: Ras association domain-containing protein 7 (359 aa).

Positions Val6–Pro89 constitute a Ras-associating domain. Positions Thr87–Glu123 are disordered. A compositionally biased stretch (polar residues) spans Pro89–Asn99. 2 coiled-coil regions span residues Trp180–His208 and Ala242–Ile301. A disordered region spans residues Ser339–Arg359.

Interacts with MAP2K7 and GTP-bound NRAS. In terms of processing, polyubiquitinated and degraded by the proteasome upon prolonged stress stimuli.

It is found in the cytoplasm. The protein localises to the cytoskeleton. Its subcellular location is the microtubule organizing center. It localises to the centrosome. In terms of biological role, negatively regulates stress-induced JNK activation and apoptosis by promoting MAP2K7 phosphorylation and inhibiting its ability to activate JNK. Following prolonged stress, anti-apoptotic effect stops because of degradation of RASSF7 protein via the ubiquitin-proteasome pathway. Required for the activation of AURKB and chromosomal congression during mitosis where it stimulates microtubule polymerization. The polypeptide is Ras association domain-containing protein 7 (Rassf7) (Mus musculus (Mouse)).